Consider the following 519-residue polypeptide: 2-isopropylmalate synthase (519 aa).

One can recognise a Pyruvate carboxyltransferase domain in the interval 12–274 (VVIFDTTLRD…WCNVESTMLT (263 aa)). Mn(2+) is bound by residues aspartate 21, histidine 209, histidine 211, and asparagine 245. Residues 398-519 (KLSSLTVIAG…QRDVPAAAAS (122 aa)) form a regulatory domain region.

The protein belongs to the alpha-IPM synthase/homocitrate synthase family. LeuA type 1 subfamily. As to quaternary structure, homodimer. The cofactor is Mn(2+).

Its subcellular location is the cytoplasm. The catalysed reaction is 3-methyl-2-oxobutanoate + acetyl-CoA + H2O = (2S)-2-isopropylmalate + CoA + H(+). Its pathway is amino-acid biosynthesis; L-leucine biosynthesis; L-leucine from 3-methyl-2-oxobutanoate: step 1/4. Catalyzes the condensation of the acetyl group of acetyl-CoA with 3-methyl-2-oxobutanoate (2-ketoisovalerate) to form 3-carboxy-3-hydroxy-4-methylpentanoate (2-isopropylmalate). The sequence is that of 2-isopropylmalate synthase from Nitrobacter winogradskyi (strain ATCC 25391 / DSM 10237 / CIP 104748 / NCIMB 11846 / Nb-255).